The chain runs to 460 residues: ATP synthase subunit beta (460 aa).

150-157 (GGAGVGKT) provides a ligand contact to ATP.

This sequence belongs to the ATPase alpha/beta chains family. As to quaternary structure, F-type ATPases have 2 components, CF(1) - the catalytic core - and CF(0) - the membrane proton channel. CF(1) has five subunits: alpha(3), beta(3), gamma(1), delta(1), epsilon(1). CF(0) has three main subunits: a(1), b(2) and c(9-12). The alpha and beta chains form an alternating ring which encloses part of the gamma chain. CF(1) is attached to CF(0) by a central stalk formed by the gamma and epsilon chains, while a peripheral stalk is formed by the delta and b chains.

The protein localises to the cell inner membrane. The catalysed reaction is ATP + H2O + 4 H(+)(in) = ADP + phosphate + 5 H(+)(out). In terms of biological role, produces ATP from ADP in the presence of a proton gradient across the membrane. The catalytic sites are hosted primarily by the beta subunits. The protein is ATP synthase subunit beta of Klebsiella pneumoniae subsp. pneumoniae (strain ATCC 700721 / MGH 78578).